The chain runs to 197 residues: MDVSIEKIKNLRASTGAGMLDCKNALEEADGDIDKAVEILRKKGAIKAAKKAGRVTNEGIVYSYIHHNEKIGVLLLLGCETDFVARTEDFHDLAKKISLQIASMNPKWISREDVPQEIIDKEKEIYLEELKNSNKPENIKEQIVENKLGKFYSENCLLEQEYVFGEGESIKDIIDSMIAKVGENITVDKFARFAIGE.

The tract at residues 81-84 is involved in Mg(2+) ion dislocation from EF-Tu; it reads TDFV.

Belongs to the EF-Ts family.

The protein resides in the cytoplasm. In terms of biological role, associates with the EF-Tu.GDP complex and induces the exchange of GDP to GTP. It remains bound to the aminoacyl-tRNA.EF-Tu.GTP complex up to the GTP hydrolysis stage on the ribosome. The polypeptide is Elongation factor Ts (Petrotoga mobilis (strain DSM 10674 / SJ95)).